The sequence spans 901 residues: HTH-type transcriptional regulator MalT (901 aa).

Position 39–46 (39–46 (SPAGYGKT)) interacts with ATP. Positions 829–894 (ELIRTSPLTQ…DAVQHAQQLL (66 aa)) constitute an HTH luxR-type domain. Residues 853–872 (NEQIAGELAVAATTIKTHIR) constitute a DNA-binding region (H-T-H motif).

Belongs to the MalT family. In terms of assembly, monomer in solution. Oligomerizes to an active state in the presence of the positive effectors ATP and maltotriose.

With respect to regulation, activated by ATP and maltotriose, which are both required for DNA binding. Positively regulates the transcription of the maltose regulon whose gene products are responsible for uptake and catabolism of malto-oligosaccharides. Specifically binds to the promoter region of its target genes, recognizing a short DNA motif called the MalT box. In Enterobacter sp. (strain 638), this protein is HTH-type transcriptional regulator MalT.